We begin with the raw amino-acid sequence, 299 residues long: Light-independent protochlorophyllide reductase iron-sulfur ATP-binding protein (299 aa).

The segment at 1 to 23 is disordered; sequence MSPLDRTPPSLRGQDGEGSVQVH. Residues 43–48 and K72 each bind ATP; that span reads GIGKST. S47 lines the Mg(2+) pocket. Positions 128 and 162 each coordinate [4Fe-4S] cluster. Residues 213-214 and 237-239 each bind ATP; these read NR and PDL.

The protein belongs to the NifH/BchL/ChlL family. In terms of assembly, homodimer. Protochlorophyllide reductase is composed of three subunits; BchL, BchN and BchB. It depends on [4Fe-4S] cluster as a cofactor.

The catalysed reaction is chlorophyllide a + oxidized 2[4Fe-4S]-[ferredoxin] + 2 ADP + 2 phosphate = protochlorophyllide a + reduced 2[4Fe-4S]-[ferredoxin] + 2 ATP + 2 H2O. It participates in porphyrin-containing compound metabolism; bacteriochlorophyll biosynthesis (light-independent). In terms of biological role, component of the dark-operative protochlorophyllide reductase (DPOR) that uses Mg-ATP and reduced ferredoxin to reduce ring D of protochlorophyllide (Pchlide) to form chlorophyllide a (Chlide). This reaction is light-independent. The L component serves as a unique electron donor to the NB-component of the complex, and binds Mg-ATP. This chain is Light-independent protochlorophyllide reductase iron-sulfur ATP-binding protein, found in Roseobacter denitrificans (strain ATCC 33942 / OCh 114) (Erythrobacter sp. (strain OCh 114)).